The sequence spans 299 residues: Single myb histone 1 (299 aa).

The region spanning 1-61 is the HTH myb-type domain; it reads MGAPKQRWTP…KWRNLSVTAG (61 aa). A DNA-binding region (H-T-H motif) is located at residues 28 to 57; that stretch reads WRTILRDSDFSALLRLRSNVDLKDKWRNLS. Residues 124–192 form the H15 domain; that stretch reads SVARLDDLIL…KVNQKYRIAP (69 aa). A coiled-coil region spans residues 238–279; it reads EEAAAFAAKAVAEAEVAIAEAEEAARVAEAAENDAEAAKAFL.

The protein belongs to the histone H1/H5 family. SMH subfamily. In terms of assembly, forms a homodimer and heterodimers. As to expression, expressed in leaves.

Its subcellular location is the nucleus. It is found in the chromosome. It localises to the nucleolus. The protein localises to the telomere. Its function is as follows. Binds preferentially double-stranded telomeric repeats 5'-TTTAGGG-3', but can also bind to the single G-rich and C-rich telomeric strand. The polypeptide is Single myb histone 1 (SMH1) (Zea mays (Maize)).